The chain runs to 594 residues: A-type ATP synthase subunit A (594 aa).

236–243 (GPFGSGKT) is an ATP binding site.

The protein belongs to the ATPase alpha/beta chains family. Has multiple subunits with at least A(3), B(3), C, D, E, F, H, I and proteolipid K(x).

Its subcellular location is the cell membrane. It catalyses the reaction ATP + H2O + 4 H(+)(in) = ADP + phosphate + 5 H(+)(out). Component of the A-type ATP synthase that produces ATP from ADP in the presence of a proton gradient across the membrane. The A chain is the catalytic subunit. The chain is A-type ATP synthase subunit A from Pyrobaculum neutrophilum (strain DSM 2338 / JCM 9278 / NBRC 100436 / V24Sta) (Thermoproteus neutrophilus).